The sequence spans 186 residues: Elongation factor P (186 aa).

Belongs to the elongation factor P family.

It localises to the cytoplasm. It functions in the pathway protein biosynthesis; polypeptide chain elongation. In terms of biological role, involved in peptide bond synthesis. Stimulates efficient translation and peptide-bond synthesis on native or reconstituted 70S ribosomes in vitro. Probably functions indirectly by altering the affinity of the ribosome for aminoacyl-tRNA, thus increasing their reactivity as acceptors for peptidyl transferase. The protein is Elongation factor P of Shewanella sp. (strain ANA-3).